The chain runs to 150 residues: Classical arabinogalactan protein 6 (150 aa).

The first 20 residues, 1–20 (MARQFVVLVLLTLTIATAFA), serve as a signal peptide directing secretion. Composition is skewed to low complexity over residues 19–75 (FAAD…SPAA) and 85–98 (SASS…APTV). A disordered region spans residues 19–131 (FAADAPSASP…ESPKSGAVTT (113 aa)). Serine 126 carries the GPI-anchor amidated serine lipid modification. The propeptide at 127 to 150 (GAVTTAKFSVVGTVATVGFFFFSF) is removed in mature form.

This sequence belongs to the classical AGP family. In terms of processing, O-glycosylated on the hydroxyproline residues. Expressed in the anthers.

The protein resides in the cell membrane. Its function is as follows. Proteoglycan that seems to be implicated in diverse developmental roles such as differentiation, cell-cell recognition, embryogenesis and programmed cell death. Plays an important role during the formation of the nexine layer of the pollen wall. The polypeptide is Classical arabinogalactan protein 6 (AGP6) (Arabidopsis thaliana (Mouse-ear cress)).